A 305-amino-acid polypeptide reads, in one-letter code: Acetylglutamate kinase (305 aa).

Residues 67 to 68, Arg-89, and Asn-190 each bind substrate; that span reads GG.

It belongs to the acetylglutamate kinase family. ArgB subfamily.

It localises to the cytoplasm. It carries out the reaction N-acetyl-L-glutamate + ATP = N-acetyl-L-glutamyl 5-phosphate + ADP. It participates in amino-acid biosynthesis; L-arginine biosynthesis; N(2)-acetyl-L-ornithine from L-glutamate: step 2/4. Its function is as follows. Catalyzes the ATP-dependent phosphorylation of N-acetyl-L-glutamate. The chain is Acetylglutamate kinase from Bifidobacterium longum (strain NCC 2705).